A 339-amino-acid chain; its full sequence is D-erythrose-4-phosphate dehydrogenase (339 aa).

Residues 12-13 (RI) and Arg-81 each bind NAD(+). Residues 154–156 (SCT), Arg-200, 213–214 (TK), and Arg-236 each bind substrate. The Nucleophile role is filled by Cys-155. Asn-318 serves as a coordination point for NAD(+).

This sequence belongs to the glyceraldehyde-3-phosphate dehydrogenase family. Epd subfamily. As to quaternary structure, homotetramer.

It localises to the cytoplasm. The enzyme catalyses D-erythrose 4-phosphate + NAD(+) + H2O = 4-phospho-D-erythronate + NADH + 2 H(+). It functions in the pathway cofactor biosynthesis; pyridoxine 5'-phosphate biosynthesis; pyridoxine 5'-phosphate from D-erythrose 4-phosphate: step 1/5. Catalyzes the NAD-dependent conversion of D-erythrose 4-phosphate to 4-phosphoerythronate. In Escherichia fergusonii (strain ATCC 35469 / DSM 13698 / CCUG 18766 / IAM 14443 / JCM 21226 / LMG 7866 / NBRC 102419 / NCTC 12128 / CDC 0568-73), this protein is D-erythrose-4-phosphate dehydrogenase.